The primary structure comprises 541 residues: Light-independent protochlorophyllide reductase subunit B (541 aa).

Aspartate 36 lines the [4Fe-4S] cluster pocket. Residue aspartate 287 is the Proton donor of the active site. 422–423 (GL) serves as a coordination point for substrate.

It belongs to the ChlB/BchB/BchZ family. As to quaternary structure, protochlorophyllide reductase is composed of three subunits; BchL, BchN and BchB. Forms a heterotetramer of two BchB and two BchN subunits. [4Fe-4S] cluster is required as a cofactor.

It carries out the reaction chlorophyllide a + oxidized 2[4Fe-4S]-[ferredoxin] + 2 ADP + 2 phosphate = protochlorophyllide a + reduced 2[4Fe-4S]-[ferredoxin] + 2 ATP + 2 H2O. It functions in the pathway porphyrin-containing compound metabolism; bacteriochlorophyll biosynthesis (light-independent). In terms of biological role, component of the dark-operative protochlorophyllide reductase (DPOR) that uses Mg-ATP and reduced ferredoxin to reduce ring D of protochlorophyllide (Pchlide) to form chlorophyllide a (Chlide). This reaction is light-independent. The NB-protein (BchN-BchB) is the catalytic component of the complex. The sequence is that of Light-independent protochlorophyllide reductase subunit B from Rhodopseudomonas palustris (strain HaA2).